The primary structure comprises 367 residues: Eukaryotic translation initiation factor 3 subunit H (367 aa).

An MPN domain is found at 14-166 (VQVEALVVMK…LRAFRLSPNF (153 aa)).

This sequence belongs to the eIF-3 subunit H family. In terms of assembly, component of the eukaryotic translation initiation factor 3 (eIF-3) complex.

It localises to the cytoplasm. In terms of biological role, component of the eukaryotic translation initiation factor 3 (eIF-3) complex, which is involved in protein synthesis of a specialized repertoire of mRNAs and, together with other initiation factors, stimulates binding of mRNA and methionyl-tRNAi to the 40S ribosome. The eIF-3 complex specifically targets and initiates translation of a subset of mRNAs involved in cell proliferation. This is Eukaryotic translation initiation factor 3 subunit H from Sclerotinia sclerotiorum (strain ATCC 18683 / 1980 / Ss-1) (White mold).